The chain runs to 319 residues: Lipoyl synthase (319 aa).

The [4Fe-4S] cluster site is built by Cys61, Cys66, Cys72, Cys87, Cys91, Cys94, and Ser300. One can recognise a Radical SAM core domain in the interval 73 to 289 (WDKKHATFMI…ESVAYSKGFL (217 aa)).

The protein belongs to the radical SAM superfamily. Lipoyl synthase family. [4Fe-4S] cluster is required as a cofactor.

The protein resides in the cytoplasm. It carries out the reaction [[Fe-S] cluster scaffold protein carrying a second [4Fe-4S](2+) cluster] + N(6)-octanoyl-L-lysyl-[protein] + 2 oxidized [2Fe-2S]-[ferredoxin] + 2 S-adenosyl-L-methionine + 4 H(+) = [[Fe-S] cluster scaffold protein] + N(6)-[(R)-dihydrolipoyl]-L-lysyl-[protein] + 4 Fe(3+) + 2 hydrogen sulfide + 2 5'-deoxyadenosine + 2 L-methionine + 2 reduced [2Fe-2S]-[ferredoxin]. It functions in the pathway protein modification; protein lipoylation via endogenous pathway; protein N(6)-(lipoyl)lysine from octanoyl-[acyl-carrier-protein]: step 2/2. Functionally, catalyzes the radical-mediated insertion of two sulfur atoms into the C-6 and C-8 positions of the octanoyl moiety bound to the lipoyl domains of lipoate-dependent enzymes, thereby converting the octanoylated domains into lipoylated derivatives. The polypeptide is Lipoyl synthase (Rhodopseudomonas palustris (strain BisB18)).